The chain runs to 113 residues: MDSMDHRIERLEYYIQLLVKTVDMDRYPFYALLIDKGLSKEEGEAVMRICDELSEELATQKAQGFVTFDKLLALFAGQLNEKLDVHETIFALYEQGLYQELMEVFIDIMKHFD.

This is an uncharacterized protein from Bacillus subtilis (strain 168).